The primary structure comprises 380 residues: Homoserine O-acetyltransferase (380 aa).

In terms of domain architecture, AB hydrolase-1 spans 70 to 366 (NAVLVFHALT…SPHGHDAFLI (297 aa)). Ser-186 acts as the Nucleophile in catalysis. Arg-250 contacts substrate. Residues Asp-333 and His-361 contribute to the active site. Asp-362 provides a ligand contact to substrate.

Belongs to the AB hydrolase superfamily. MetX family. Homodimer.

The protein localises to the cytoplasm. It catalyses the reaction L-homoserine + acetyl-CoA = O-acetyl-L-homoserine + CoA. The protein operates within amino-acid biosynthesis; L-methionine biosynthesis via de novo pathway; O-acetyl-L-homoserine from L-homoserine: step 1/1. Its function is as follows. Transfers an acetyl group from acetyl-CoA to L-homoserine, forming acetyl-L-homoserine. The protein is Homoserine O-acetyltransferase of Thermus thermophilus (strain ATCC BAA-163 / DSM 7039 / HB27).